The sequence spans 150 residues: Putative esterase VC_A0580 (150 aa).

It belongs to the thioesterase PaaI family.

The protein is Putative esterase VC_A0580 of Vibrio cholerae serotype O1 (strain ATCC 39315 / El Tor Inaba N16961).